A 485-amino-acid polypeptide reads, in one-letter code: MTITPQHLIALLPLLIVGLTVVVVMLSIAWRRNHFLNATLSVIGLNAALVSLWFVGQAGAMDVTPLMRVDGFAMLYTGLVLLASLATCTFAYPWLEGYNDNQEEFYLLVLIASLGGILLANANHLAALFLGIELISLPLFGLIGYAFRQKRSLEASIKYTILSAAASSFLLFGMALVYAQSGNLSFEALGKSLGDGMLHEPLLLAGFGLMIVGLGFKLSLVPFHLWTPDVYQGAPAPVSTFLATASKIAIFGVVMRLFLYAPVGDSEAVRVVLGIIAFASIIFGNLMALSQTNIKRLLGYSSISHLGYLLVALIVLQSGEMSMEAVGVYLAGYLFSSLGAFGVVSLMSSPFRGPDADSLYSYRGLFWHRPVLAAVMTVMMLSLAGIPMTLGFIGKFYVLAVGVQASLWWLVAAVVVGSAIGLYYYLRVAVSLYLHAPQQPGRDAPTNWQYSAGGIVVLISALLVLVLGVWPQPLISLVQLAMPLM.

The next 14 membrane-spanning stretches (helical) occupy residues 8 to 28 (LIAL…MLSI), 35 to 55 (FLNA…LWFV), 71 to 91 (GFAM…CTFA), 105 to 125 (FYLL…ANHL), 127 to 147 (ALFL…GYAF), 159 to 179 (YTIL…LVYA), 203 to 223 (LLAG…LVPF), 235 to 255 (PAPV…GVVM), 271 to 291 (VVLG…ALSQ), 297 to 317 (LLGY…IVLQ), 326 to 346 (VGVY…VVSL), 373 to 393 (AAVM…LGFI), 408 to 430 (WWLV…RVAV), and 455 to 475 (IVVL…QPLI).

This sequence belongs to the complex I subunit 2 family. NDH-1 is composed of 13 different subunits. Subunits NuoA, H, J, K, L, M, N constitute the membrane sector of the complex.

Its subcellular location is the cell inner membrane. The enzyme catalyses a quinone + NADH + 5 H(+)(in) = a quinol + NAD(+) + 4 H(+)(out). In terms of biological role, NDH-1 shuttles electrons from NADH, via FMN and iron-sulfur (Fe-S) centers, to quinones in the respiratory chain. The immediate electron acceptor for the enzyme in this species is believed to be ubiquinone. Couples the redox reaction to proton translocation (for every two electrons transferred, four hydrogen ions are translocated across the cytoplasmic membrane), and thus conserves the redox energy in a proton gradient. The polypeptide is NADH-quinone oxidoreductase subunit N (Salmonella choleraesuis (strain SC-B67)).